A 383-amino-acid polypeptide reads, in one-letter code: Probable L-aspartate decarboxylase (383 aa).

The residue at position 231 (lysine 231) is an N6-(pyridoxal phosphate)lysine.

It belongs to the group II decarboxylase family. MfnA subfamily. It depends on pyridoxal 5'-phosphate as a cofactor.

The enzyme catalyses L-aspartate + H(+) = beta-alanine + CO2. The protein operates within cofactor biosynthesis; coenzyme A biosynthesis. Functionally, catalyzes the decarboxylation of L-aspartate to produce beta-alanine. In Thermococcus gammatolerans (strain DSM 15229 / JCM 11827 / EJ3), this protein is Probable L-aspartate decarboxylase.